The chain runs to 309 residues: Small ribosomal subunit biogenesis GTPase RsgA (309 aa).

Positions 88 to 247 (KNLITRPPVA…IADTPGFNKP (160 aa)) constitute a CP-type G domain. Residues 137-140 (TKRD) and 189-197 (GPSGVGKSS) each bind GTP. Residues Cys272, Cys277, His279, and Cys285 each contribute to the Zn(2+) site.

Belongs to the TRAFAC class YlqF/YawG GTPase family. RsgA subfamily. Monomer. Associates with 30S ribosomal subunit, binds 16S rRNA. Zn(2+) is required as a cofactor.

It localises to the cytoplasm. In terms of biological role, one of several proteins that assist in the late maturation steps of the functional core of the 30S ribosomal subunit. Helps release RbfA from mature subunits. May play a role in the assembly of ribosomal proteins into the subunit. Circularly permuted GTPase that catalyzes slow GTP hydrolysis, GTPase activity is stimulated by the 30S ribosomal subunit. This Prochlorococcus marinus (strain SARG / CCMP1375 / SS120) protein is Small ribosomal subunit biogenesis GTPase RsgA.